The sequence spans 118 residues: Large ribosomal subunit protein bL20 (118 aa).

Belongs to the bacterial ribosomal protein bL20 family.

Binds directly to 23S ribosomal RNA and is necessary for the in vitro assembly process of the 50S ribosomal subunit. It is not involved in the protein synthesizing functions of that subunit. The sequence is that of Large ribosomal subunit protein bL20 from Thermosipho africanus (strain TCF52B).